A 631-amino-acid chain; its full sequence is Polyadenylate-binding protein, cytoplasmic and nuclear (631 aa).

The disordered stretch occupies residues 1–56 (MSDLQESLEKLSINEKAPQAPADDATPSNTTTLEKESSESAAAAAGEGAGEEGEEA). 4 consecutive RRM domains span residues 58 to 136 (ASLY…WSQR), 146 to 223 (GNIF…KHVS), 239 to 316 (TNVY…RAQK), and 342 to 419 (VNLF…LAQR). Residues 518-545 (GGEFNGPNGQRQQRGAYPPNRNQKGGRP) are disordered. Positions 545–626 (PQRDLAAIIS…ALTAFEEYKK (82 aa)) constitute a PABC domain.

Belongs to the polyadenylate-binding protein type-1 family.

It is found in the cytoplasm. The protein resides in the nucleus. Binds the poly(A) tail of mRNA. Appears to be an important mediator of the multiple roles of the poly(A) tail in mRNA biogenesis, stability and translation. In the nucleus, involved in both mRNA cleavage and polyadenylation. Is also required for efficient mRNA export to the cytoplasm. Acts in concert with a poly(A)-specific nuclease (PAN) to affect poly(A) tail shortening, which may occur concomitantly with either nucleocytoplasmic mRNA transport or translational initiation. In the cytoplasm, stimulates translation initiation and regulates mRNA decay through translation termination-coupled poly(A) shortening, probably mediated by PAN. The polypeptide is Polyadenylate-binding protein, cytoplasmic and nuclear (PAB1) (Meyerozyma guilliermondii (strain ATCC 6260 / CBS 566 / DSM 6381 / JCM 1539 / NBRC 10279 / NRRL Y-324) (Yeast)).